The primary structure comprises 537 residues: Phosphoenolpyruvate carboxykinase (ATP) (537 aa).

Residues Arg-61, Tyr-194, and Lys-200 each coordinate substrate. Residues Lys-200, His-219, and 235 to 243 each bind ATP; that span reads GLSGTGKTT. Residues Lys-200 and His-219 each contribute to the Mn(2+) site. Asp-256 is a binding site for Mn(2+). 3 residues coordinate ATP: Glu-284, Arg-322, and Thr-448. Arg-322 provides a ligand contact to substrate.

This sequence belongs to the phosphoenolpyruvate carboxykinase (ATP) family. The cofactor is Mn(2+).

Its subcellular location is the cytoplasm. It catalyses the reaction oxaloacetate + ATP = phosphoenolpyruvate + ADP + CO2. The protein operates within carbohydrate biosynthesis; gluconeogenesis. Functionally, involved in the gluconeogenesis. Catalyzes the conversion of oxaloacetate (OAA) to phosphoenolpyruvate (PEP) through direct phosphoryl transfer between the nucleoside triphosphate and OAA. The sequence is that of Phosphoenolpyruvate carboxykinase (ATP) from Bradyrhizobium sp. (strain ORS 278).